The chain runs to 105 residues: Ketoisovalerate oxidoreductase subunit VorD (105 aa).

2 consecutive 4Fe-4S ferredoxin-type domains span residues 44–73 (FMPV…IKED) and 74–103 (GFVA…MVRE). [4Fe-4S] cluster contacts are provided by Cys53, Cys56, Cys59, Cys63, Cys83, Cys86, Cys89, and Cys93.

As to quaternary structure, heterotetramer of one alpha, one beta, one delta and one gamma chain. [4Fe-4S] cluster is required as a cofactor.

The catalysed reaction is 3-methyl-2-oxobutanoate + 2 oxidized [2Fe-2S]-[ferredoxin] + CoA = 2-methylpropanoyl-CoA + 2 reduced [2Fe-2S]-[ferredoxin] + CO2 + H(+). This is Ketoisovalerate oxidoreductase subunit VorD (vorD) from Pyrococcus horikoshii (strain ATCC 700860 / DSM 12428 / JCM 9974 / NBRC 100139 / OT-3).